A 31-amino-acid polypeptide reads, in one-letter code: Potassium channel toxin alpha-KTx 5.5 (31 aa).

Cystine bridges form between Cys-3-Cys-21, Cys-8-Cys-26, and Cys-12-Cys-28. The interval 6-9 is [R/K]XCQ motif; that stretch reads RRCE. A Histidine amide modification is found at His-31.

In terms of tissue distribution, expressed by the venom gland.

The protein resides in the secreted. Functionally, blocks small conductance calcium-activated potassium channels. This Hottentotta tamulus (Eastern Indian scorpion) protein is Potassium channel toxin alpha-KTx 5.5.